The sequence spans 490 residues: MDYAKRIGQVGALAVVLGVGAAVTTHAIGSAAPTDPSSSSTDSPVDACSPLGGSASSLAAIPGASVPQVGVRQVDPGSIPDDLLNALIDFLAAVRNGLVPIIENRTPVANPQQVSVPEGGTVGPVRFDACDPDGNRMTFAVRERGAPGGPQHGIVTVDQRTASFIYTADPGFVGTDTFSVNVSDDTSLHVHGLAGYLGPFHGHDDVATVTVFVGNTPTDTISGDFSMLTYNIAGLPFPLSSAILPRFFYTKEIGKRLNAYYVANVQEDFAYHQFLIKKSKMPSQTPPEPPTLLWPIGVPFSDGLNTLSEFKVQRLDRQTWYECTSDNCLTLKGFTYSQMRLPGGDTVDVYNLHTNTGGGPTTNANLAQVANYIQQNSAGRAVIVTGDFNARYSDDQSALLQFAQVNGLTDAWVQVEHGPTTPPFAPTCMVGNECELLDKIFYRSGQGVTLQAVSYGNEAPKFFNSKGEPLSDHSPAVVGFHYVADNVAVR.

Positions 1–31 (MDYAKRIGQVGALAVVLGVGAAVTTHAIGSA) are cleaved as a signal peptide. A disordered region spans residues 30 to 49 (SAAPTDPSSSSTDSPVDACS). Over 32–136 (APTDPSSSST…FDACDPDGNR (105 aa)) the chain is Periplasmic. A beta stranded membrane pass occupies residues 137-145 (MTFAVRERG). The Extracellular segment spans residues 146-161 (APGGPQHGIVTVDQRT). Residues 162–168 (ASFIYTA) traverse the membrane as a beta stranded segment. The Periplasmic segment spans residues 169 to 171 (DPG). Residues 172-182 (FVGTDTFSVNV) form a beta stranded membrane-spanning segment. Residues 183-187 (SDDTS) are Extracellular-facing. Residues 188–196 (LHVHGLAGY) traverse the membrane as a beta stranded segment. The Periplasmic portion of the chain corresponds to 197 to 204 (LGPFHGHD). The beta stranded transmembrane segment at 205–213 (DVATVTVFV) threads the bilayer. Residues 214–490 (GNTPTDTISG…HYVADNVAVR (277 aa)) lie on the Extracellular side of the membrane.

This sequence belongs to the SpmT family.

Its subcellular location is the cell outer membrane. It catalyses the reaction a sphingomyelin + H2O = phosphocholine + an N-acylsphing-4-enine + H(+). Catalyzes the cleavage of sphingomyelin, a major lipid in eukaryotic cells, into ceramide and phosphocholine, which are then utilized by M.bovis as carbon, nitrogen and phosphorus sources, respectively. Thus, enables M.bovis to utilize sphingomyelin as a source of several essential nutrients for intracellular growth during infection. Furthermore, lyses erythrocytes and constitutes a hemolytic factor. This Mycobacterium bovis (strain ATCC BAA-935 / AF2122/97) protein is Sphingomyelinase.